The chain runs to 71 residues: DNA-directed RNA polymerase subunit omega (71 aa).

It belongs to the RNA polymerase subunit omega family. The RNAP catalytic core consists of 2 alpha, 1 beta, 1 beta' and 1 omega subunit. When a sigma factor is associated with the core the holoenzyme is formed, which can initiate transcription.

The catalysed reaction is RNA(n) + a ribonucleoside 5'-triphosphate = RNA(n+1) + diphosphate. In terms of biological role, promotes RNA polymerase assembly. Latches the N- and C-terminal regions of the beta' subunit thereby facilitating its interaction with the beta and alpha subunits. This Campylobacter curvus (strain 525.92) protein is DNA-directed RNA polymerase subunit omega.